The primary structure comprises 455 residues: Bifunctional protein GlmU (455 aa).

Residues methionine 1–proline 227 are pyrophosphorylase. UDP-N-acetyl-alpha-D-glucosamine-binding positions include leucine 8–glycine 11, lysine 22, glutamine 73, glycine 78–threonine 79, tyrosine 100–aspartate 102, glycine 137, glutamate 152, asparagine 167, and asparagine 225. Mg(2+) is bound at residue aspartate 102. Asparagine 225 serves as a coordination point for Mg(2+). Residues valine 228 to glutamine 248 form a linker region. Positions glycine 249–lysine 455 are N-acetyltransferase. UDP-N-acetyl-alpha-D-glucosamine-binding residues include arginine 331 and lysine 349. The active-site Proton acceptor is the histidine 361. UDP-N-acetyl-alpha-D-glucosamine contacts are provided by tyrosine 364 and asparagine 375. Residues alanine 378, asparagine 384–tyrosine 385, serine 403, alanine 421, and arginine 438 each bind acetyl-CoA. The interval glycine 420 to lysine 455 is disordered.

It in the N-terminal section; belongs to the N-acetylglucosamine-1-phosphate uridyltransferase family. This sequence in the C-terminal section; belongs to the transferase hexapeptide repeat family. Homotrimer. Requires Mg(2+) as cofactor.

Its subcellular location is the cytoplasm. It carries out the reaction alpha-D-glucosamine 1-phosphate + acetyl-CoA = N-acetyl-alpha-D-glucosamine 1-phosphate + CoA + H(+). It catalyses the reaction N-acetyl-alpha-D-glucosamine 1-phosphate + UTP + H(+) = UDP-N-acetyl-alpha-D-glucosamine + diphosphate. The protein operates within nucleotide-sugar biosynthesis; UDP-N-acetyl-alpha-D-glucosamine biosynthesis; N-acetyl-alpha-D-glucosamine 1-phosphate from alpha-D-glucosamine 6-phosphate (route II): step 2/2. It functions in the pathway nucleotide-sugar biosynthesis; UDP-N-acetyl-alpha-D-glucosamine biosynthesis; UDP-N-acetyl-alpha-D-glucosamine from N-acetyl-alpha-D-glucosamine 1-phosphate: step 1/1. Its pathway is bacterial outer membrane biogenesis; LPS lipid A biosynthesis. Its function is as follows. Catalyzes the last two sequential reactions in the de novo biosynthetic pathway for UDP-N-acetylglucosamine (UDP-GlcNAc). The C-terminal domain catalyzes the transfer of acetyl group from acetyl coenzyme A to glucosamine-1-phosphate (GlcN-1-P) to produce N-acetylglucosamine-1-phosphate (GlcNAc-1-P), which is converted into UDP-GlcNAc by the transfer of uridine 5-monophosphate (from uridine 5-triphosphate), a reaction catalyzed by the N-terminal domain. This Acidithiobacillus ferrooxidans (strain ATCC 23270 / DSM 14882 / CIP 104768 / NCIMB 8455) (Ferrobacillus ferrooxidans (strain ATCC 23270)) protein is Bifunctional protein GlmU.